The sequence spans 348 residues: Putative S-adenosyl-L-methionine-dependent methyltransferase MRA_3439 (348 aa).

Residues Asp-171 and 200–201 (DL) each bind S-adenosyl-L-methionine.

The protein belongs to the UPF0677 family.

Functionally, exhibits S-adenosyl-L-methionine-dependent methyltransferase activity. This is Putative S-adenosyl-L-methionine-dependent methyltransferase MRA_3439 from Mycobacterium tuberculosis (strain ATCC 25177 / H37Ra).